The sequence spans 431 residues: ATP-dependent protease ATPase subunit HslU (431 aa).

Residues valine 18, 60-65 (GVGKTE), aspartate 244, glutamate 309, and arginine 381 each bind ATP.

Belongs to the ClpX chaperone family. HslU subfamily. A double ring-shaped homohexamer of HslV is capped on each side by a ring-shaped HslU homohexamer. The assembly of the HslU/HslV complex is dependent on binding of ATP.

It is found in the cytoplasm. Its function is as follows. ATPase subunit of a proteasome-like degradation complex; this subunit has chaperone activity. The binding of ATP and its subsequent hydrolysis by HslU are essential for unfolding of protein substrates subsequently hydrolyzed by HslV. HslU recognizes the N-terminal part of its protein substrates and unfolds these before they are guided to HslV for hydrolysis. The sequence is that of ATP-dependent protease ATPase subunit HslU from Caulobacter sp. (strain K31).